The sequence spans 64 residues: Cytochrome c oxidase subunit 2 (64 aa).

The Mitochondrial intermembrane segment spans residues 1-14; the sequence is MAHPSQLGFQDAAS. A helical membrane pass occupies residues 15 to 45; the sequence is PMMEELLHFHDHALMVVFLISTFVLYIILTM. The Mitochondrial matrix portion of the chain corresponds to 46-64; the sequence is LTTKLTDKLILESHEIEII.

It belongs to the cytochrome c oxidase subunit 2 family. As to quaternary structure, component of the cytochrome c oxidase (complex IV, CIV), a multisubunit enzyme composed of 14 subunits. The complex is composed of a catalytic core of 3 subunits MT-CO1, MT-CO2 and MT-CO3, encoded in the mitochondrial DNA, and 11 supernumerary subunits COX4I, COX5A, COX5B, COX6A, COX6B, COX6C, COX7A, COX7B, COX7C, COX8 and NDUFA4, which are encoded in the nuclear genome. The complex exists as a monomer or a dimer and forms supercomplexes (SCs) in the inner mitochondrial membrane with NADH-ubiquinone oxidoreductase (complex I, CI) and ubiquinol-cytochrome c oxidoreductase (cytochrome b-c1 complex, complex III, CIII), resulting in different assemblies (supercomplex SCI(1)III(2)IV(1) and megacomplex MCI(2)III(2)IV(2)). Found in a complex with TMEM177, COA6, COX18, COX20, SCO1 and SCO2. Interacts with TMEM177 in a COX20-dependent manner. Interacts with COX20. Interacts with COX16. Cu cation is required as a cofactor.

It localises to the mitochondrion inner membrane. The enzyme catalyses 4 Fe(II)-[cytochrome c] + O2 + 8 H(+)(in) = 4 Fe(III)-[cytochrome c] + 2 H2O + 4 H(+)(out). In terms of biological role, component of the cytochrome c oxidase, the last enzyme in the mitochondrial electron transport chain which drives oxidative phosphorylation. The respiratory chain contains 3 multisubunit complexes succinate dehydrogenase (complex II, CII), ubiquinol-cytochrome c oxidoreductase (cytochrome b-c1 complex, complex III, CIII) and cytochrome c oxidase (complex IV, CIV), that cooperate to transfer electrons derived from NADH and succinate to molecular oxygen, creating an electrochemical gradient over the inner membrane that drives transmembrane transport and the ATP synthase. Cytochrome c oxidase is the component of the respiratory chain that catalyzes the reduction of oxygen to water. Electrons originating from reduced cytochrome c in the intermembrane space (IMS) are transferred via the dinuclear copper A center (CU(A)) of subunit 2 and heme A of subunit 1 to the active site in subunit 1, a binuclear center (BNC) formed by heme A3 and copper B (CU(B)). The BNC reduces molecular oxygen to 2 water molecules using 4 electrons from cytochrome c in the IMS and 4 protons from the mitochondrial matrix. The chain is Cytochrome c oxidase subunit 2 (mt-co2) from Geophagus steindachneri (Red hump earth eater).